Consider the following 93-residue polypeptide: UPF0298 protein LMHCC_0506 (93 aa).

Belongs to the UPF0298 family.

It is found in the cytoplasm. This chain is UPF0298 protein LMHCC_0506, found in Listeria monocytogenes serotype 4a (strain HCC23).